The chain runs to 208 residues: Uracil phosphoribosyltransferase (208 aa).

Residues arginine 78, arginine 103, and 130–138 (DPMLATGGS) each bind 5-phospho-alpha-D-ribose 1-diphosphate. Residues isoleucine 193 and 198 to 200 (GDA) each bind uracil. Residue aspartate 199 coordinates 5-phospho-alpha-D-ribose 1-diphosphate.

Belongs to the UPRTase family. The cofactor is Mg(2+).

The enzyme catalyses UMP + diphosphate = 5-phospho-alpha-D-ribose 1-diphosphate + uracil. Its pathway is pyrimidine metabolism; UMP biosynthesis via salvage pathway; UMP from uracil: step 1/1. Allosterically activated by GTP. Catalyzes the conversion of uracil and 5-phospho-alpha-D-ribose 1-diphosphate (PRPP) to UMP and diphosphate. The protein is Uracil phosphoribosyltransferase of Desulfovibrio desulfuricans (strain ATCC 27774 / DSM 6949 / MB).